A 92-amino-acid polypeptide reads, in one-letter code: Small ribosomal subunit protein bS18 (92 aa).

The protein belongs to the bacterial ribosomal protein bS18 family. In terms of assembly, part of the 30S ribosomal subunit. Forms a tight heterodimer with protein bS6.

Its function is as follows. Binds as a heterodimer with protein bS6 to the central domain of the 16S rRNA, where it helps stabilize the platform of the 30S subunit. The protein is Small ribosomal subunit protein bS18 of Chlorobium chlorochromatii (strain CaD3).